Consider the following 167-residue polypeptide: cAMP-dependent protein kinase type I-alpha regulatory subunit (167 aa).

Position 12 is a phosphothreonine (T12). 2 positions are modified to phosphoserine: S14 and S20. The Pseudophosphorylation motif motif lies at 30 to 33 (RGAI). Residue S34 is modified to Phosphoserine. Residues 51–78 (LFSH…SKVS), 79–167 (ILES…ILKR), E147, and R156 contribute to the 3',5'-cyclic AMP site. A Phosphoserine modification is found at S82.

It belongs to the cAMP-dependent kinase regulatory chain family. In terms of assembly, the inactive holoenzyme is composed of two regulatory chains and two catalytic chains. Activation by cAMP releases the two active catalytic monomers and the regulatory dimer. Interacts with PRKACA and PRKACB. PRKAR1A also interacts with RFC2; the complex may be involved in cell survival. Interacts with AKAP4. Interacts with RARA; the interaction occurs in the presence of cAMP or FSH and regulates RARA transcriptional activity. Interacts with the phosphorylated form of PJA2. Interacts with CBFA2T3. Interacts with PRKX; regulates this cAMP-dependent protein kinase. Interacts with smAKAP; this interaction may target PRKAR1A to the plasma membrane. Interacts with AICDA. In terms of processing, the pseudophosphorylation site binds to the substrate-binding region of the catalytic chain, resulting in the inhibition of its activity.

It is found in the cell membrane. Functionally, regulatory subunit of the cAMP-dependent protein kinases involved in cAMP signaling in cells. This chain is cAMP-dependent protein kinase type I-alpha regulatory subunit, found in Mesocricetus auratus (Golden hamster).